A 390-amino-acid polypeptide reads, in one-letter code: Formate-dependent phosphoribosylglycinamide formyltransferase (390 aa).

Residues 18–19 (EL) and Glu-78 each bind N(1)-(5-phospho-beta-D-ribosyl)glycinamide. ATP contacts are provided by residues Arg-110, Lys-151, 156 to 161 (SSGKGQ), 191 to 194 (EEFL), and Glu-199. The region spanning 115–305 (DLASKELNIK…EFELHLRAFL (191 aa)) is the ATP-grasp domain. Positions 264 and 276 each coordinate Mg(2+). Residues Asp-283, Lys-353, and 360 to 361 (RR) contribute to the N(1)-(5-phospho-beta-D-ribosyl)glycinamide site.

This sequence belongs to the PurK/PurT family. As to quaternary structure, homodimer.

It catalyses the reaction N(1)-(5-phospho-beta-D-ribosyl)glycinamide + formate + ATP = N(2)-formyl-N(1)-(5-phospho-beta-D-ribosyl)glycinamide + ADP + phosphate + H(+). It participates in purine metabolism; IMP biosynthesis via de novo pathway; N(2)-formyl-N(1)-(5-phospho-D-ribosyl)glycinamide from N(1)-(5-phospho-D-ribosyl)glycinamide (formate route): step 1/1. Functionally, involved in the de novo purine biosynthesis. Catalyzes the transfer of formate to 5-phospho-ribosyl-glycinamide (GAR), producing 5-phospho-ribosyl-N-formylglycinamide (FGAR). Formate is provided by PurU via hydrolysis of 10-formyl-tetrahydrofolate. In Prochlorococcus marinus subsp. pastoris (strain CCMP1986 / NIES-2087 / MED4), this protein is Formate-dependent phosphoribosylglycinamide formyltransferase.